The following is a 609-amino-acid chain: Snake venom metalloproteinase-disintegrin-like mocarhagin (609 aa).

A signal peptide spans 1–20 (MIQALLVAICLAVFPYQGSS). Positions 21–191 (IILESGNVND…DEPIEKSSQL (171 aa)) are excised as a propeptide. Residues 205–400 (KYIEFYVVVD…DRPQCILNKP (196 aa)) enclose the Peptidase M12B domain. 2 residues coordinate Ca(2+): E208 and D292. The N-linked (GlcNAc...) asparagine glycan is linked to N303. 3 disulfides stabilise this stretch: C316–C395, C356–C379, and C358–C363. Positions 341 and 345 each coordinate Zn(2+). Ca(2+) is bound by residues C395, N398, V410, N413, F415, E417, E420, and D423. A Disintegrin domain is found at 408–494 (PPVCGNYFVE…KCPKDSFQRN (87 aa)). 14 cysteine pairs are disulfide-bonded: C411-C440, C422-C435, C424-C430, C434-C457, C448-C454, C453-C479, C466-C486, C473-C505, C498-C510, C517-C567, C532-C575, C545-C555, C562-C601, and C595-C606. The D/ECD-tripeptide signature appears at 472–474 (DCD). An N-linked (GlcNAc...) asparagine glycan is attached at N507.

It belongs to the venom metalloproteinase (M12B) family. P-III subfamily. P-IIIa sub-subfamily. In terms of assembly, monomer. It depends on Zn(2+) as a cofactor. As to expression, expressed by the venom gland.

It localises to the secreted. Inhibited by EDTA and diisopropyl fluorophosphate (DFP). Also inhibited by an excess of zinc or calcium ions. Its function is as follows. Snake venom zinc metalloproteinase that inhibits platelet aggregation by cleaving platelet glycoprotein Ib alpha (GP1BA) at Glu-298/Asp-299, and abolishes binding of von Willebrand factor (VWF) to GPIBA. Cleaves P-selectin glycoprotein ligand-1 (PSGL-1/SELPLG) at Tyr-51/Asp-52, and completely abolishes the binding of PSGL-1 to P-selectin. Anionic amino acid sequences containing sulfated tyrosines are needed for cleavages. Inhibits the thrombin-induced platelet aggregation, and the thrombin-induced release of ATP and ADP. Has lectin activity (inhibited by heparin). This Naja mossambica (Mozambique spitting cobra) protein is Snake venom metalloproteinase-disintegrin-like mocarhagin.